A 299-amino-acid chain; its full sequence is F-actin-capping protein subunit alpha-3 (299 aa).

Phosphoserine is present on residues S2 and S290.

It belongs to the F-actin-capping protein alpha subunit family. In terms of assembly, component of the F-actin capping complex, composed of a heterodimer of an alpha and a beta subunit. Component of the WASH complex, composed of F-actin-capping protein subunit alpha (CAPZA1, CAPZA2 or CAPZA3), F-actin-capping protein subunit beta (CAPZB), WASHC1, WASHC2, WASHC3, WASHC4 and WASHC5. As to expression, exclusively expressed in the testis.

It localises to the cytoplasm. The protein localises to the cytoskeleton. F-actin-capping proteins bind in a Ca(2+)-independent manner to the fast growing ends of actin filaments (barbed end) thereby blocking the exchange of subunits at these ends. Unlike other capping proteins (such as gelsolin and severin), these proteins do not sever actin filaments. May play a role in the morphogenesis of spermatid. This chain is F-actin-capping protein subunit alpha-3 (Capza3), found in Mus musculus (Mouse).